Consider the following 339-residue polypeptide: Nicotinate-nucleotide--dimethylbenzimidazole phosphoribosyltransferase (339 aa).

E306 functions as the Proton acceptor in the catalytic mechanism.

Belongs to the CobT family.

The enzyme catalyses 5,6-dimethylbenzimidazole + nicotinate beta-D-ribonucleotide = alpha-ribazole 5'-phosphate + nicotinate + H(+). It participates in nucleoside biosynthesis; alpha-ribazole biosynthesis; alpha-ribazole from 5,6-dimethylbenzimidazole: step 1/2. Its function is as follows. Catalyzes the synthesis of alpha-ribazole-5'-phosphate from nicotinate mononucleotide (NAMN) and 5,6-dimethylbenzimidazole (DMB). This is Nicotinate-nucleotide--dimethylbenzimidazole phosphoribosyltransferase from Brucella anthropi (strain ATCC 49188 / DSM 6882 / CCUG 24695 / JCM 21032 / LMG 3331 / NBRC 15819 / NCTC 12168 / Alc 37) (Ochrobactrum anthropi).